A 238-amino-acid chain; its full sequence is Snake venom metalloproteinase HF-1 (238 aa).

The region spanning 17–221 is the Peptidase M12B domain; that stretch reads RYIQLVVVAD…YNPQCILNKP (205 aa). Position 106 (Asp106) interacts with Ca(2+). 2 disulfide bridges follow: Cys130–Cys216 and Cys174–Cys181. His158 contributes to the Zn(2+) binding site. Glu159 is an active-site residue. Zn(2+)-binding residues include His162 and His168. Cys216 and Asn219 together coordinate Ca(2+).

In terms of assembly, monomer. Zn(2+) is required as a cofactor. Expressed by the venom gland.

The protein resides in the secreted. Inhibited by EDTA and EGTA. Inhibited by serum and antihemorrhagic factors Da2-I and Da2-II from D.albiventris. Not inhibited by PMSF or SBT-I. In terms of biological role, snake venom zinc metalloprotease that is weakly hemorrhagic and has Aalpha, Bbeta fibrinogenolytic activities. Cleaves the Aalpha chain of fibrinogen first, followed by the Bbeta chain and shows no effect on the gamma chain. Has caseinolytic activity. Induces dose-dependent edema. This is Snake venom metalloproteinase HF-1 from Bothrops marajoensis (Marajo lancehead).